The primary structure comprises 514 residues: 2-isopropylmalate synthase (514 aa).

Residues 5 to 268 (LIIFDTTLRD…DVGIDTTQIV (264 aa)) enclose the Pyruvate carboxyltransferase domain. Mn(2+) contacts are provided by aspartate 14, histidine 202, histidine 204, and asparagine 239. Positions 395–514 (KFVSLSQHSE…KDDKLNPQRA (120 aa)) are regulatory domain.

This sequence belongs to the alpha-IPM synthase/homocitrate synthase family. LeuA type 1 subfamily. In terms of assembly, homodimer. It depends on Mn(2+) as a cofactor.

The protein resides in the cytoplasm. It catalyses the reaction 3-methyl-2-oxobutanoate + acetyl-CoA + H2O = (2S)-2-isopropylmalate + CoA + H(+). It participates in amino-acid biosynthesis; L-leucine biosynthesis; L-leucine from 3-methyl-2-oxobutanoate: step 1/4. Its function is as follows. Catalyzes the condensation of the acetyl group of acetyl-CoA with 3-methyl-2-oxobutanoate (2-ketoisovalerate) to form 3-carboxy-3-hydroxy-4-methylpentanoate (2-isopropylmalate). The protein is 2-isopropylmalate synthase of Burkholderia vietnamiensis (strain G4 / LMG 22486) (Burkholderia cepacia (strain R1808)).